A 536-amino-acid polypeptide reads, in one-letter code: 1,4-beta-D-glucan cellobiohydrolase B (536 aa).

Residues 1–21 (MSSFQIYRAALLLSILATANA) form the signal peptide. A catalytic region spans residues 22 to 458 (QQVGTYTTET…SNIKFGPIGS (437 aa)). E233 functions as the Nucleophile in the catalytic mechanism. The active-site Proton donor is E238. N-linked (GlcNAc...) asparagine glycans are attached at residues N351 and N414. The interval 459 to 500 (TYSSGSSSGSGSSSSSSSTTTKATSTTLKTTSTTSSGSSSTS) is ser/Thr-rich linker. Residues 464–499 (SSSGSGSSSSSSSTTTKATSTTLKTTSTTSSGSSST) form a disordered region. The 37-residue stretch at 500-536 (SAAQAYGQCGGQGWTGPTTCVSGYTCTYENAYYSQCL) folds into the CBM1 domain. 2 disulfide bridges follow: C508–C525 and C519–C535.

Belongs to the glycosyl hydrolase 7 (cellulase C) family.

The protein resides in the secreted. It carries out the reaction Hydrolysis of (1-&gt;4)-beta-D-glucosidic linkages in cellulose and cellotetraose, releasing cellobiose from the non-reducing ends of the chains.. In terms of biological role, the biological conversion of cellulose to glucose generally requires three types of hydrolytic enzymes: (1) Endoglucanases which cut internal beta-1,4-glucosidic bonds; (2) Exocellobiohydrolases that cut the disaccharide cellobiose from the non-reducing end of the cellulose polymer chain; (3) Beta-1,4-glucosidases which hydrolyze the cellobiose and other short cello-oligosaccharides to glucose. This chain is 1,4-beta-D-glucan cellobiohydrolase B (cbhB), found in Aspergillus niger.